We begin with the raw amino-acid sequence, 250 residues long: Glycerol-1-phosphate phosphohydrolase 1 (250 aa).

Residue aspartate 18 is the Nucleophile of the active site. Aspartate 18 and aspartate 20 together coordinate Mg(2+). Aspartate 20 serves as the catalytic Proton donor. A Glycyl lysine isopeptide (Lys-Gly) (interchain with G-Cter in SUMO); alternate cross-link involves residue lysine 64. Lysine 64 participates in a covalent cross-link: Glycyl lysine isopeptide (Lys-Gly) (interchain with G-Cter in ubiquitin); alternate. Phosphoserine is present on serine 90. Lysine 144 participates in a covalent cross-link: Glycyl lysine isopeptide (Lys-Gly) (interchain with G-Cter in ubiquitin). Aspartate 179 is a Mg(2+) binding site.

Belongs to the HAD-like hydrolase superfamily. DOG/GPP family. In terms of assembly, monomer. Mg(2+) is required as a cofactor.

Its subcellular location is the cytoplasm. It is found in the nucleus. The catalysed reaction is sn-glycerol 1-phosphate + H2O = glycerol + phosphate. It carries out the reaction sn-glycerol 3-phosphate + H2O = glycerol + phosphate. Its function is as follows. Major isoform of glycerol-1-phosphate phosphohydrolase involved in glycerol biosynthesis. Plays a role in osmoadaptation and required for adaptation to anaerobic conditions. The chain is Glycerol-1-phosphate phosphohydrolase 1 from Saccharomyces cerevisiae (strain ATCC 204508 / S288c) (Baker's yeast).